Reading from the N-terminus, the 99-residue chain is Putative protein tag-209 (99 aa).

Positions 1 to 16 (MLKLLAFVALLSVSVS) are cleaved as a signal peptide.

The chain is Putative protein tag-209 (tag-209) from Caenorhabditis elegans.